The chain runs to 311 residues: 4-hydroxy-tetrahydrodipicolinate synthase (311 aa).

T49 is a pyruvate binding site. Catalysis depends on Y138, which acts as the Proton donor/acceptor. The active-site Schiff-base intermediate with substrate is K166. V207 is a binding site for pyruvate.

This sequence belongs to the DapA family. In terms of assembly, homotetramer; dimer of dimers.

Its subcellular location is the cytoplasm. It carries out the reaction L-aspartate 4-semialdehyde + pyruvate = (2S,4S)-4-hydroxy-2,3,4,5-tetrahydrodipicolinate + H2O + H(+). It participates in amino-acid biosynthesis; L-lysine biosynthesis via DAP pathway; (S)-tetrahydrodipicolinate from L-aspartate: step 3/4. In terms of biological role, catalyzes the condensation of (S)-aspartate-beta-semialdehyde [(S)-ASA] and pyruvate to 4-hydroxy-tetrahydrodipicolinate (HTPA). This chain is 4-hydroxy-tetrahydrodipicolinate synthase, found in Lactobacillus helveticus (strain DPC 4571).